The primary structure comprises 124 residues: Histone H2A, embryonic (124 aa).

Over residues 1–18 (MSGRGKSGKARTKAKTRS) the composition is skewed to basic residues. The disordered stretch occupies residues 1-21 (MSGRGKSGKARTKAKTRSSRA). At serine 2 the chain carries N-acetylserine. Serine 2 carries the post-translational modification Phosphoserine. Residue glutamine 104 is modified to N5-methylglutamine. Lysine 119 is covalently cross-linked (Glycyl lysine isopeptide (Lys-Gly) (interchain with G-Cter in ubiquitin)).

The protein belongs to the histone H2A family. The nucleosome is a histone octamer containing two molecules each of H2A, H2B, H3 and H4 assembled in one H3-H4 heterotetramer and two H2A-H2B heterodimers. The octamer wraps approximately 147 bp of DNA. Monoubiquitination of Lys-119 gives a specific tag for epigenetic transcriptional repression. In terms of processing, phosphorylation of Ser-2 directly represses transcription.

It localises to the nucleus. It is found in the chromosome. Its function is as follows. Core component of nucleosome. Nucleosomes wrap and compact DNA into chromatin, limiting DNA accessibility to the cellular machineries which require DNA as a template. Histones thereby play a central role in transcription regulation, DNA repair, DNA replication and chromosomal stability. DNA accessibility is regulated via a complex set of post-translational modifications of histones, also called histone code, and nucleosome remodeling. This is Histone H2A, embryonic from Psammechinus miliaris (Green sea urchin).